The primary structure comprises 470 residues: Putative multidrug resistance protein MdtD (470 aa).

The Periplasmic portion of the chain corresponds to Met1–Gln11. The chain crosses the membrane as a helical span at residues Leu12–Ala32. Residues Leu33–His48 lie on the Cytoplasmic side of the membrane. The chain crosses the membrane as a helical span at residues Met49–Ala69. At Asp70 to Asn76 the chain is on the periplasmic side. The chain crosses the membrane as a helical span at residues Ile77–Thr97. Topologically, residues Leu98–Leu101 are cytoplasmic. A helical transmembrane segment spans residues Val102–Met124. At Lys125–Thr137 the chain is on the periplasmic side. The chain crosses the membrane as a helical span at residues Phe138–Val158. Topologically, residues Glu159–His164 are cytoplasmic. A helical membrane pass occupies residues Trp165–Met185. Residues Pro186–Asp196 lie on the Periplasmic side of the membrane. A helical membrane pass occupies residues Leu197–Ser217. Residues Lys218–Pro224 lie on the Cytoplasmic side of the membrane. The helical transmembrane segment at Trp225–Ala245 threads the bilayer. At Lys246 to Thr262 the chain is on the periplasmic side. The helical transmembrane segment at Phe263–Met283 threads the bilayer. Residues Thr284–Pro285 are Cytoplasmic-facing. The chain crosses the membrane as a helical span at residues Val286–Met306. The Periplasmic portion of the chain corresponds to Val307–Ser341. A helical transmembrane segment spans residues Leu342 to Leu362. Residues Gln363–Ser395 are Cytoplasmic-facing. Residues Met396–Phe416 traverse the membrane as a helical segment. The Periplasmic segment spans residues Gly417–His430. Residues Val431–Ala451 form a helical membrane-spanning segment. Residues Arg452–Leu470 are Cytoplasmic-facing.

Belongs to the major facilitator superfamily. TCR/Tet family.

It localises to the cell inner membrane. The chain is Putative multidrug resistance protein MdtD from Salmonella typhi.